A 282-amino-acid chain; its full sequence is Bifunctional protein FolD (282 aa).

Residues 164–166 (GRS) and serine 189 each bind NADP(+).

Belongs to the tetrahydrofolate dehydrogenase/cyclohydrolase family. In terms of assembly, homodimer.

It catalyses the reaction (6R)-5,10-methylene-5,6,7,8-tetrahydrofolate + NADP(+) = (6R)-5,10-methenyltetrahydrofolate + NADPH. The enzyme catalyses (6R)-5,10-methenyltetrahydrofolate + H2O = (6R)-10-formyltetrahydrofolate + H(+). It functions in the pathway one-carbon metabolism; tetrahydrofolate interconversion. In terms of biological role, catalyzes the oxidation of 5,10-methylenetetrahydrofolate to 5,10-methenyltetrahydrofolate and then the hydrolysis of 5,10-methenyltetrahydrofolate to 10-formyltetrahydrofolate. The protein is Bifunctional protein FolD of Streptococcus suis (strain 05ZYH33).